The following is a 305-amino-acid chain: Ribonucleoside-diphosphate reductase small subunit (305 aa).

Fe cation contacts are provided by glutamate 64, glutamate 94, and histidine 97. The active site involves tyrosine 101. A helical membrane pass occupies residues 150 to 170 (VLVFLLIEGIFFISSFYSIAT). Fe cation-binding residues include glutamate 157, glutamate 191, and histidine 194.

The protein belongs to the ribonucleoside diphosphate reductase small chain family. As to quaternary structure, heterotetramer composed of a homodimer of the large subunit (R1) and a homodimer of the small subunit (R2). Larger multisubunit protein complex are also active, composed of (R1)n(R2)n. Fe cation serves as cofactor.

It localises to the host membrane. The catalysed reaction is a 2'-deoxyribonucleoside 5'-diphosphate + [thioredoxin]-disulfide + H2O = a ribonucleoside 5'-diphosphate + [thioredoxin]-dithiol. In terms of biological role, ribonucleoside-diphosphate reductase holoenzyme provides the precursors necessary for viral DNA synthesis. Allows virus growth in non-dividing cells, as well as reactivation from latency in infected hosts. Catalyzes the biosynthesis of deoxyribonucleotides from the corresponding ribonucleotides. This Equus caballus (Horse) protein is Ribonucleoside-diphosphate reductase small subunit.